A 295-amino-acid chain; its full sequence is UDP-N-acetylenolpyruvoylglucosamine reductase (295 aa).

Positions 23–188 (KVGGPADFLA…ISAKFALKPG (166 aa)) constitute an FAD-binding PCMH-type domain. Residue arginine 167 is part of the active site. Catalysis depends on serine 217, which acts as the Proton donor. The active site involves glutamate 287.

The protein belongs to the MurB family. FAD is required as a cofactor.

The protein resides in the cytoplasm. The catalysed reaction is UDP-N-acetyl-alpha-D-muramate + NADP(+) = UDP-N-acetyl-3-O-(1-carboxyvinyl)-alpha-D-glucosamine + NADPH + H(+). It participates in cell wall biogenesis; peptidoglycan biosynthesis. Its function is as follows. Cell wall formation. The polypeptide is UDP-N-acetylenolpyruvoylglucosamine reductase (Streptococcus pyogenes serotype M3 (strain ATCC BAA-595 / MGAS315)).